We begin with the raw amino-acid sequence, 355 residues long: Ion-translocating oxidoreductase complex subunit D (355 aa).

The next 5 helical transmembrane spans lie at 13–33 (GKLT…ALAV), 35–55 (VYYF…LALI), 77–97 (VILT…YWVI), 98–118 (LIGT…LGQN), and 128–148 (VVLL…ISLL). Residue Thr186 is modified to FMN phosphoryl threonine. 5 helical membrane passes run 216–236 (AGLG…FLIW), 245–265 (PVAI…FGNA), 267–287 (AVGF…FFIA), 294–314 (PVTP…ICLI), and 318–338 (GNYP…VPLI).

The protein belongs to the NqrB/RnfD family. The complex is composed of six subunits: RnfA, RnfB, RnfC, RnfD, RnfE and RnfG. FMN serves as cofactor.

Its subcellular location is the cell inner membrane. Part of a membrane-bound complex that couples electron transfer with translocation of ions across the membrane. In Actinobacillus succinogenes (strain ATCC 55618 / DSM 22257 / CCUG 43843 / 130Z), this protein is Ion-translocating oxidoreductase complex subunit D.